The primary structure comprises 121 residues: Acid shock protein (121 aa).

A signal peptide spans M1 to A21. A propeptide spanning residues A22 to Q63 is cleaved from the precursor. Positions A40 to A121 are disordered. The segment covering A84–S93 has biased composition (basic residues). The span at V94–Q103 shows a compositional bias: low complexity. The span at A104–K113 shows a compositional bias: basic residues.

The protein belongs to the Asr family. In terms of processing, proteolytic processing gives rise to the active protein.

It is found in the periplasm. Its function is as follows. Required for growth and/or survival at acidic conditions. The chain is Acid shock protein from Yersinia pestis bv. Antiqua (strain Antiqua).